A 342-amino-acid polypeptide reads, in one-letter code: 4-hydroxy-2-oxovalerate aldolase 2 (342 aa).

The region spanning isoleucine 8 to glutamine 260 is the Pyruvate carboxyltransferase domain. Arginine 16–aspartate 17 is a binding site for substrate. Aspartate 17 serves as a coordination point for Mn(2+). Histidine 20 acts as the Proton acceptor in catalysis. Positions 170 and 199 each coordinate substrate. The Mn(2+) site is built by histidine 199 and histidine 201. Substrate is bound at residue tyrosine 290.

It belongs to the 4-hydroxy-2-oxovalerate aldolase family.

The catalysed reaction is (S)-4-hydroxy-2-oxopentanoate = acetaldehyde + pyruvate. The protein is 4-hydroxy-2-oxovalerate aldolase 2 (mhpE) of Azoarcus sp. (strain BH72).